We begin with the raw amino-acid sequence, 308 residues long: Coenzyme PQQ synthesis protein B (308 aa).

The protein belongs to the PqqB family.

It participates in cofactor biosynthesis; pyrroloquinoline quinone biosynthesis. In terms of biological role, may be involved in the transport of PQQ or its precursor to the periplasm. This Rhodopseudomonas palustris (strain BisB5) protein is Coenzyme PQQ synthesis protein B.